A 1042-amino-acid polypeptide reads, in one-letter code: Kinesin-like protein KIN-5A (1042 aa).

The span at 1 to 14 (MDSNNSKKGSSVKS) shows a compositional bias: low complexity. A disordered region spans residues 1-45 (MDSNNSKKGSSVKSPCQTPRSTEKSNRDFRVDSNSNSNPVSKNEK). Residues 21-31 (STEKSNRDFRV) are compositionally biased toward basic and acidic residues. Over residues 32-41 (DSNSNSNPVS) the composition is skewed to polar residues. Residues 50–392 (NIQVIVRCRP…LDYAHRAKHI (343 aa)) enclose the Kinesin motor domain. 136–143 (GQTGTGKT) contacts ATP. The stretch at 480–517 (TAGLREKLDKTEKKLYETEQALLDLEEKHRQAVATIKE) forms a coiled coil. The tract at residues 1021-1042 (KQMQNGEAKHVSNGRPPLTAIN) is disordered.

This sequence belongs to the TRAFAC class myosin-kinesin ATPase superfamily. Kinesin family. KIN-5/BimC subfamily.

The protein resides in the cytoplasm. Its subcellular location is the cytoskeleton. The protein localises to the spindle. In terms of biological role, responsible for microtubule translocation. May be important for the organization of phragmoplast-specific arrays of microtubules. Plays an essential role in stabilizing the mitotic spindle. Required during mitotic cytokinesis. In Arabidopsis thaliana (Mouse-ear cress), this protein is Kinesin-like protein KIN-5A.